The sequence spans 335 residues: Tetraacyldisaccharide 4'-kinase (335 aa).

51 to 58 (HVGGAGKT) is an ATP binding site.

Belongs to the LpxK family.

The enzyme catalyses a lipid A disaccharide + ATP = a lipid IVA + ADP + H(+). It functions in the pathway glycolipid biosynthesis; lipid IV(A) biosynthesis; lipid IV(A) from (3R)-3-hydroxytetradecanoyl-[acyl-carrier-protein] and UDP-N-acetyl-alpha-D-glucosamine: step 6/6. Its function is as follows. Transfers the gamma-phosphate of ATP to the 4'-position of a tetraacyldisaccharide 1-phosphate intermediate (termed DS-1-P) to form tetraacyldisaccharide 1,4'-bis-phosphate (lipid IVA). This is Tetraacyldisaccharide 4'-kinase from Nitrobacter hamburgensis (strain DSM 10229 / NCIMB 13809 / X14).